We begin with the raw amino-acid sequence, 477 residues long: Bifunctional protein HldE (477 aa).

Residues 1–318 (MKVTLPEFER…ENAVRGRADT (318 aa)) are ribokinase. An N6-acetyllysine modification is found at K179. 195–198 (NLSE) contributes to the ATP binding site. D264 is an active-site residue. The cytidylyltransferase stretch occupies residues 344–477 (MTNGVFDILH…IKKIQQDKKG (134 aa)).

It in the N-terminal section; belongs to the carbohydrate kinase PfkB family. This sequence in the C-terminal section; belongs to the cytidylyltransferase family. As to quaternary structure, homodimer.

The enzyme catalyses D-glycero-beta-D-manno-heptose 7-phosphate + ATP = D-glycero-beta-D-manno-heptose 1,7-bisphosphate + ADP + H(+). It carries out the reaction D-glycero-beta-D-manno-heptose 1-phosphate + ATP + H(+) = ADP-D-glycero-beta-D-manno-heptose + diphosphate. Its pathway is nucleotide-sugar biosynthesis; ADP-L-glycero-beta-D-manno-heptose biosynthesis; ADP-L-glycero-beta-D-manno-heptose from D-glycero-beta-D-manno-heptose 7-phosphate: step 1/4. The protein operates within nucleotide-sugar biosynthesis; ADP-L-glycero-beta-D-manno-heptose biosynthesis; ADP-L-glycero-beta-D-manno-heptose from D-glycero-beta-D-manno-heptose 7-phosphate: step 3/4. It functions in the pathway bacterial outer membrane biogenesis; LPS core biosynthesis. Catalyzes the phosphorylation of D-glycero-D-manno-heptose 7-phosphate at the C-1 position to selectively form D-glycero-beta-D-manno-heptose-1,7-bisphosphate. Functionally, catalyzes the ADP transfer from ATP to D-glycero-beta-D-manno-heptose 1-phosphate, yielding ADP-D-glycero-beta-D-manno-heptose. The protein is Bifunctional protein HldE of Escherichia coli O157:H7.